Consider the following 67-residue polypeptide: Sec-independent protein translocase protein TatA (67 aa).

A helical transmembrane segment spans residues 1-21; that stretch reads MFGIGIQELLVVLVLVLLVFG. The interval 46–67 is disordered; the sequence is PDEIDITPGKKNGKTDKDDKQA. A compositionally biased stretch (basic and acidic residues) spans 58–67; it reads GKTDKDDKQA.

The protein belongs to the TatA/E family. The Tat system comprises two distinct complexes: a TatABC complex, containing multiple copies of TatA, TatB and TatC subunits, and a separate TatA complex, containing only TatA subunits. Substrates initially bind to the TatABC complex, which probably triggers association of the separate TatA complex to form the active translocon.

It localises to the cell inner membrane. In terms of biological role, part of the twin-arginine translocation (Tat) system that transports large folded proteins containing a characteristic twin-arginine motif in their signal peptide across membranes. TatA could form the protein-conducting channel of the Tat system. The sequence is that of Sec-independent protein translocase protein TatA from Nitratidesulfovibrio vulgaris (strain DSM 19637 / Miyazaki F) (Desulfovibrio vulgaris).